The sequence spans 206 residues: RNA-binding protein with multiple splicing 2 (206 aa).

An N-acetylserine modification is found at Ser-2. Positions 25–102 constitute an RRM domain; sequence RTLFVSGLPV…QTLRLEFAKA (78 aa). The important for homodimerization stretch occupies residues 35–45; sequence DIKPRELYLLF.

Homodimer. Interacts with EEF2.

The protein localises to the cytoplasm. It localises to the nucleus. The protein resides in the stress granule. Functionally, RNA-binding protein involved in the regulation of smooth muscle cell differentiation and proliferation in the gastrointestinal system. Binds NOG mRNA, the major inhibitor of the bone morphogenetic protein (BMP) pathway. Mediates an increase of NOG mRNA levels, thereby contributing to the negative regulation of BMP signaling pathway and promoting reversible dedifferentiation and proliferation of smooth muscle cells. Acts as a pre-mRNA alternative splicing regulator. Mediates ACTN1 and FLNB alternative splicing. Likely binds to mRNA tandem CAC trinucleotide or CA dinucleotide motifs. In Mus musculus (Mouse), this protein is RNA-binding protein with multiple splicing 2 (Rbpms2).